Reading from the N-terminus, the 621-residue chain is 1-deoxy-D-xylulose-5-phosphate synthase (621 aa).

Residues His80 and 121 to 123 each bind thiamine diphosphate; that span reads GHS. Asp152 provides a ligand contact to Mg(2+). Thiamine diphosphate-binding positions include 153 to 154, Asn181, Tyr288, and Glu370; that span reads GA. Mg(2+) is bound at residue Asn181.

It belongs to the transketolase family. DXPS subfamily. In terms of assembly, homodimer. The cofactor is Mg(2+). It depends on thiamine diphosphate as a cofactor.

It catalyses the reaction D-glyceraldehyde 3-phosphate + pyruvate + H(+) = 1-deoxy-D-xylulose 5-phosphate + CO2. The protein operates within metabolic intermediate biosynthesis; 1-deoxy-D-xylulose 5-phosphate biosynthesis; 1-deoxy-D-xylulose 5-phosphate from D-glyceraldehyde 3-phosphate and pyruvate: step 1/1. Its function is as follows. Catalyzes the acyloin condensation reaction between C atoms 2 and 3 of pyruvate and glyceraldehyde 3-phosphate to yield 1-deoxy-D-xylulose-5-phosphate (DXP). This Shewanella woodyi (strain ATCC 51908 / MS32) protein is 1-deoxy-D-xylulose-5-phosphate synthase.